Here is a 31-residue protein sequence, read N- to C-terminus: Ice-structuring glycoprotein 3 (31 aa).

10 O-linked (GalNAc...) threonine glycosylation sites follow: Thr3, Thr6, Thr9, Thr12, Thr15, Thr18, Thr21, Thr24, Thr27, and Thr30.

O-linked glycans consist of Gal-GalNAc disaccharides. The three proteins may differ only in the number of repeating units of -Ala-Ala-Thr-.

It is found in the secreted. Antifreeze proteins lower the blood freezing point. This fish lives in antarctic waters where it experiences water temperatures near -1.9 degrees Celsius. Its blood has a freezing point of about -2.0 degrees Celsius, and 30% of the freezing-point depression is due mainly to the 3 major high molecular weight glycoproteins in the plasma. In Pagothenia borchgrevinki (Bald rockcod), this protein is Ice-structuring glycoprotein 3.